Here is a 2089-residue protein sequence, read N- to C-terminus: Mediator of DNA damage checkpoint protein 1 (2089 aa).

Positions 1–19 are enriched in acidic residues; it reads MEDTQAIDWDVEEEEETEQ. The segment at 1–22 is disordered; that stretch reads MEDTQAIDWDVEEEEETEQSSE. The segment at 1–150 is interaction with CHEK2; that stretch reads MEDTQAIDWD…SRGPLTVEET (150 aa). Residues 2-220 are interaction with the MRN complex; the sequence is EDTQAIDWDV…PFAFNLNSDT (219 aa). Threonine 4 is modified (phosphothreonine; by ATM). Residues 54 to 105 enclose the FHA domain; the sequence is NVVGRMPDCSVALPFPSISKQHAEIEILAWDKAPILRDCGSLNGTQILRPPK. The residue at position 108 (serine 108) is a Phosphoserine. The required for nuclear localization (NLS1) stretch occupies residues 145–568; sequence LTVEETPRVQ…PAKLLVVSLE (424 aa). The residue at position 146 (threonine 146) is a Phosphothreonine. A Phosphoserine; by CK2 modification is found at serine 168. Phosphoserine is present on serine 176. 3 disordered regions span residues 185–248, 261–280, and 286–317; these read RTTS…AKQS, DQPLVKERDNDTKVKRGAGN, and GVILERSQPPGEDSDTDVDDDSRPPGRPAEVH. Phosphoserine; by CK2 occurs at positions 196 and 218. Threonine 220 is subject to Phosphothreonine; by CK2. Residues 261-274 are compositionally biased toward basic and acidic residues; the sequence is DQPLVKERDNDTKV. Phosphoserine; by CK2 is present on serine 299. Phosphothreonine; by CK2 is present on threonine 301. Residues 306–317 are compositionally biased toward basic and acidic residues; sequence DSRPPGRPAEVH. At serine 329 the chain carries Phosphoserine; by CK2. Position 331 is a phosphothreonine; by CK2 (threonine 331). Serine 372 bears the Phosphoserine mark. Position 376 is a phosphoserine; by CK2 (serine 376). Residue threonine 378 is modified to Phosphothreonine; by CK2. Phosphoserine is present on residues serine 394 and serine 397. Serine 402 is subject to Phosphoserine; by CK2. Threonine 404 carries the post-translational modification Phosphothreonine; by CK2. At serine 411 the chain carries Phosphoserine. Threonine 449 is subject to Phosphothreonine. The residue at position 453 (serine 453) is a Phosphoserine; by CK2. Threonine 455 bears the Phosphothreonine; by CK2 mark. Residues 482-515 are disordered; that stretch reads RAHSEKDQPPFGDSDDSVEADKSSPGIHLERSQA. Residues serine 485, serine 495, serine 498, serine 504, serine 505, and serine 513 each carry the phosphoserine modification. Threonine 523 is modified (phosphothreonine). A Phosphoserine modification is found at serine 590. Lysine 616 participates in a covalent cross-link: Glycyl lysine isopeptide (Lys-Gly) (interchain with G-Cter in SUMO1); alternate. A Glycyl lysine isopeptide (Lys-Gly) (interchain with G-Cter in SUMO2); alternate cross-link involves residue lysine 616. 2 disordered regions span residues 653–689 and 780–1887; these read DTLGESTQPQREGAQVPTGREREQHVGGTKDSEDNYG and SPPR…TKLN. Residues 671-685 show a composition bias toward basic and acidic residues; it reads GREREQHVGGTKDSE. 2 positions are modified to phosphoserine: serine 780 and serine 793. Position 812 is an N6-acetyllysine (lysine 812). Composition is skewed to basic and acidic residues over residues 819-844, 851-862, 868-905, and 914-951; these read ETAERVGPERGPLERETEKLLPERQT, ELTKGKQDREQK, DTQRQESDKNGESASPERDRESLKVEIETSEEIQEKQV, and AFEREVERPVANRECDPAELEEKVPKVILERDTQRGEP. Phosphoserine occurs at positions 955 and 998. Over residues 955-965 the composition is skewed to polar residues; sequence SQDQKGQASSP. A compositionally biased stretch (basic and acidic residues) spans 1016-1031; sequence KASRIRAAEKVSRGDQ. Serine 1033 is modified (phosphoserine). Residues 1040–1051 show a composition bias toward pro residues; it reads PTVPEAPAPPQK. Residues serine 1068 and serine 1086 each carry the phosphoserine modification. Basic residues predominate over residues 1103–1113; the sequence is PKPKIRTRKSS. The span at 1129–1156 shows a compositional bias: polar residues; that stretch reads PSTSTAQPVTPKPTSQATRSRTNRSSVK. Positions 1148 to 1610 are interaction with the PRKDC complex; sequence SRTNRSSVKT…TNRSSVKTPE (463 aa). Position 1157 is a phosphothreonine (threonine 1157). A compositionally biased stretch (polar residues) spans 1169–1187; it reads QPSTSTDQPVTSEPTSQVT. Threonine 1198 carries the phosphothreonine modification. The segment covering 1210 to 1228 has biased composition (polar residues); the sequence is QPSTSTDRPVTSEPTSQAT. Serine 1235 carries the phosphoserine modification. At threonine 1239 the chain carries Phosphothreonine. Over residues 1251–1268 the composition is skewed to polar residues; it reads QPSTSTDQPVTSEPTYQA. Phosphothreonine occurs at positions 1280 and 1302. Composition is skewed to low complexity over residues 1304–1318 and 1347–1359; these read KPTSRTTRSRTNMSS and TSRTTRSRTNMSS. The span at 1375–1391 shows a compositional bias: polar residues; the sequence is PSTSTEQPVTPEPTSRA. Serine 1399 and serine 1400 each carry phosphoserine. Position 1402 is an N6-acetyllysine (lysine 1402). A Phosphothreonine modification is found at threonine 1403. Lysine 1413 participates in a covalent cross-link: Glycyl lysine isopeptide (Lys-Gly) (interchain with G-Cter in SUMO1); alternate. Residue lysine 1413 forms a Glycyl lysine isopeptide (Lys-Gly) (interchain with G-Cter in SUMO2); alternate linkage. 4 stretches are compositionally biased toward polar residues: residues 1416-1444, 1456-1475, 1498-1514, and 1538-1555; these read PSTSTDQPVTPEPTSQATRGRTNRSSVKT, QPSTSTDQPVTPEPTSQATR, ASASTDQPVTSEPTSRT, and QPSTSTDQPVTPEPTSRA. A phosphothreonine mark is found at threonine 1425 and threonine 1466. Threonine 1548 is subject to Phosphothreonine. Serine 1564 is subject to Phosphoserine. Residues threonine 1567 and threonine 1589 each carry the phosphothreonine modification. Residues 1579-1596 show a composition bias toward polar residues; the sequence is QPSTSRNQLVTPEPTSRA. Serine 1604 is modified (phosphoserine). Phosphothreonine is present on threonine 1608. The segment covering 1611 to 1620 has biased composition (pro residues); the sequence is PVVPTAPEPH. Residues 1624–1636 show a composition bias toward polar residues; the sequence is STDQPVTPKLTSR. 3 positions are modified to phosphothreonine: threonine 1630, threonine 1664, and threonine 1671. Residues 1678–1689 are compositionally biased toward polar residues; the sequence is GGQSKTLRSSTV. A Phosphoserine modification is found at serine 1681. Threonine 1697 bears the Phosphothreonine mark. Residues 1698–1719 are compositionally biased toward polar residues; the sequence is PEFQSPVTTDQPISPEPITQPS. The required for nuclear localization (NLS2) stretch occupies residues 1698–2089; sequence PEFQSPVTTD…VLSPLEMSST (392 aa). Serine 1702 and serine 1711 each carry phosphoserine. A Glycyl lysine isopeptide (Lys-Gly) (interchain with G-Cter in SUMO2) cross-link involves residue lysine 1740. Serine 1775 is subject to Phosphoserine. A Glycyl lysine isopeptide (Lys-Gly) (interchain with G-Cter in SUMO2) cross-link involves residue lysine 1790. At threonine 1800 the chain carries Phosphothreonine. Serine 1820 bears the Phosphoserine mark. The span at 1823 to 1836 shows a compositional bias: polar residues; the sequence is HQKQPQRGEVSQKT. Lysine 1840 is covalently cross-linked (Glycyl lysine isopeptide (Lys-Gly) (interchain with G-Cter in SUMO1); alternate). Lysine 1840 is covalently cross-linked (Glycyl lysine isopeptide (Lys-Gly) (interchain with G-Cter in SUMO2); alternate). Over residues 1847 to 1857 the composition is skewed to basic and acidic residues; that stretch reads AEKPGKEEDVV. Position 1858 is a phosphothreonine (threonine 1858). 2 consecutive BRCT domains span residues 1892-1970 and 1991-2082; these read APKV…EYVV and RERR…FVLS. The residue at position 1943 (arginine 1943) is an Omega-N-methylarginine.

In terms of assembly, homodimer. Interacts with H2AX, which requires phosphorylation of H2AX on 'Ser-139'. Interacts with the MRN complex, composed of MRE11, RAD50, and NBN. Interacts with CHEK2, which requires ATM-mediated phosphorylation of 'Thr-68' within the FHA domain of CHEK2. Interacts constitutively with the BRCA1-BARD1 complex, SMC1A and TP53BP1. Interacts with ATM and FANCD2, and these interactions are reduced upon DNA damage. Also interacts with the PRKDC complex, composed of XRCC6/KU70, XRCC5/KU80 and PRKDC/XRCC7. This interaction may be required for PRKDC autophosphorylation, which is essential for DNA double strand break (DSB) repair. When phosphorylated by ATM, interacts with RNF8 (via FHA domain). Interacts with CEP164. When phosphorylated, interacts with APTX (via FHA-like domain). Interacts (when phosphorylated) with TOPBP1; promoting TOPBP1 localization to DNA damage sites during mitosis. Interacts (when phosphorylated) with NBN; promoting NBN and MRN complex localization to DNA damage sites. Phosphorylated upon exposure to ionizing radiation (IR), ultraviolet radiation (UV), and hydroxyurea (HU). Phosphorylation in response to IR requires ATM, NBN, and possibly CHEK2. Also phosphorylated during the G2/M phase of the cell cycle and during activation of the mitotic spindle checkpoint. Phosphorylation at Thr-4 by ATM stabilizes and enhances homodimerization via the FHA domain. Phosphorylated at Ser-168 and Ser-196 by CK2 in response to DNA damage during mitosis, promoting interaction with TOPBP1. Phosphorylated by CK2 in response to DNA damage, promoting interaction with NBN and recruitment of the MRN complex to DNA damage sites. Post-translationally, sumoylation at Lys-1840 by PIAS4 following DNA damage promotes ubiquitin-mediated degradation. In terms of processing, ubiquitinated by RNF4, leading to proteasomal degradation; undergoes 'Lys-48'-linked polyubiquitination. In terms of tissue distribution, highly expressed in testis.

It is found in the nucleus. It localises to the chromosome. Functionally, histone reader protein required for checkpoint-mediated cell cycle arrest in response to DNA damage within both the S phase and G2/M phases of the cell cycle. Specifically recognizes and binds histone H2AX phosphorylated at 'Ser-139', a marker of DNA damage, serving as a scaffold for the recruitment of DNA repair and signal transduction proteins to discrete foci of DNA damage sites. Also required for downstream events subsequent to the recruitment of these proteins. These include phosphorylation and activation of the ATM, CHEK1 and CHEK2 kinases, and stabilization of TP53/p53 and apoptosis. ATM and CHEK2 may also be activated independently by a parallel pathway mediated by TP53BP1. Required for chromosomal stability during mitosis by promoting recruitment of TOPBP1 to DNA double strand breaks (DSBs): TOPBP1 forms filamentous assemblies that bridge MDC1 and tether broken chromosomes during mitosis. Required for the repair of DSBs via homologous recombination by promoting recruitment of NBN component of the MRN complex to DSBs. The sequence is that of Mediator of DNA damage checkpoint protein 1 from Homo sapiens (Human).